Consider the following 863-residue polypeptide: Paramyosin (863 aa).

The interval M1 to P18 is nonhelical region. Residues S19–I836 are a coiled coil. The segment at G837–M863 is nonhelical region.

The protein belongs to the paramyosin family. As to quaternary structure, homodimer or monomer in secreted form.

The protein localises to the cytoplasm. Its subcellular location is the myofibril. The protein resides in the secreted. In terms of biological role, paramyosin is a major structural component of many thick filaments isolated from invertebrate muscles. It is a prominent antigen in human cysticercosis, may have a role as a modulator of the host immune response. It is able to bind collagen and has complement inhibitor activity. The chain is Paramyosin (PMY) from Taenia solium (Pork tapeworm).